The chain runs to 96 residues: Citrate lyase acyl carrier protein (96 aa).

Residue S14 is modified to O-(phosphoribosyl dephospho-coenzyme A)serine.

The protein belongs to the CitD family. In terms of assembly, oligomer with a subunit composition of (alpha,beta,gamma)6.

It localises to the cytoplasm. Functionally, covalent carrier of the coenzyme of citrate lyase. The sequence is that of Citrate lyase acyl carrier protein from Lactiplantibacillus plantarum (strain ATCC BAA-793 / NCIMB 8826 / WCFS1) (Lactobacillus plantarum).